The sequence spans 365 residues: MSIEIANIKKSFGRTQVLNDISLDIPSGQMVALLGPSGSGKTTLLRIIAGLEHQTSGHIRFHGTDVSRLHARDRKVGFVFQHYALFRHMTVFDNITFGLTVLPRRERPNAAAIKAKVTKLLEMVQLAHLADRYPAQLSGGQKQRVALARALAVEPQILLLDEPFGALDAQVRKELRRWLRQLHEELKFTSVFVTHDQEEATEVADRVVVMSQGNIEQADAPNQVWREPATRFVLEFMGEVNRLQGTIRGGQFHVGAHRWPLGYTPAYQGPVDLFLRPWEVDISRRTSLDSPLPVQVLEASPKGHYTQLVVQPLGWYNEPLTVVMHGDDAPQHGERLFVGLQHARLYNGDERIETRDEELALAQSA.

Residues 3–237 form the ABC transporter domain; it reads IEIANIKKSF…PATRFVLEFM (235 aa). 35-42 contacts ATP; the sequence is GPSGSGKT.

Belongs to the ABC transporter superfamily. Sulfate/tungstate importer (TC 3.A.1.6) family. In terms of assembly, the complex is composed of two ATP-binding proteins (CysA), two transmembrane proteins (CysT and CysW) and a solute-binding protein (CysP).

It localises to the cell inner membrane. The enzyme catalyses sulfate(out) + ATP + H2O = sulfate(in) + ADP + phosphate + H(+). The catalysed reaction is thiosulfate(out) + ATP + H2O = thiosulfate(in) + ADP + phosphate + H(+). Part of the ABC transporter complex CysAWTP involved in sulfate/thiosulfate import. Responsible for energy coupling to the transport system. The protein is Sulfate/thiosulfate import ATP-binding protein CysA of Shigella flexneri.